Consider the following 81-residue polypeptide: MPKRIMKGVVVSAKQDKTAIVRVERTFTHPMLKKIVRKTNKYHAHDENNVAVEGQTIAIRECAPKSKLKRWEVVAEEGTEA.

This sequence belongs to the universal ribosomal protein uS17 family. As to quaternary structure, part of the 30S ribosomal subunit.

One of the primary rRNA binding proteins, it binds specifically to the 5'-end of 16S ribosomal RNA. In Hyphomonas neptunium (strain ATCC 15444), this protein is Small ribosomal subunit protein uS17.